Consider the following 127-residue polypeptide: EPQRPAPGHPPPAGAVCLTGAQKPAACRCSRQDPKNRVNCGFPGITSDQCFTSGCCFDSQVPGVPWCFKPLPAQESEECVMEVSARKNCGYPGISPEDCARRNCCFSDTIPEVPWCFFPMSVEDCHY.

An N-terminal signal peptide occupies residues 1 to 21; the sequence is EPQRPAPGHPPPAGAVCLTGA. At glutamine 22 the chain carries Pyrrolidone carboxylic acid. P-type domains are found at residues 27–71 and 77–120; these read CRCS…FKPL and EECV…FFPM. Intrachain disulfides connect cysteine 27–cysteine 125, cysteine 29–cysteine 56, cysteine 40–cysteine 55, cysteine 50–cysteine 67, cysteine 79–cysteine 105, cysteine 89–cysteine 104, and cysteine 99–cysteine 116.

Found in pancreas.

It is found in the secreted. In terms of biological role, inhibits gastrointestinal motility and gastric acid secretion. Could function as a structural component of gastric mucus, possibly by stabilizing glycoproteins in the mucus gel through interactions with carbohydrate side chains. In Sus scrofa (Pig), this protein is Trefoil factor 2 (TFF2).